The following is a 214-amino-acid chain: GTP cyclohydrolase 1 (214 aa).

Zn(2+)-binding residues include C108, H111, and C179.

This sequence belongs to the GTP cyclohydrolase I family. As to quaternary structure, toroid-shaped homodecamer, composed of two pentamers of five dimers.

It carries out the reaction GTP + H2O = 7,8-dihydroneopterin 3'-triphosphate + formate + H(+). The protein operates within cofactor biosynthesis; 7,8-dihydroneopterin triphosphate biosynthesis; 7,8-dihydroneopterin triphosphate from GTP: step 1/1. The protein is GTP cyclohydrolase 1 of Shewanella loihica (strain ATCC BAA-1088 / PV-4).